The primary structure comprises 220 residues: Thiopurine S-methyltransferase (220 aa).

S-adenosyl-L-methionine contacts are provided by tryptophan 10, leucine 45, glutamate 66, and arginine 123.

Belongs to the class I-like SAM-binding methyltransferase superfamily. TPMT family.

It localises to the cytoplasm. The enzyme catalyses S-adenosyl-L-methionine + a thiopurine = S-adenosyl-L-homocysteine + a thiopurine S-methylether.. In Pseudomonas syringae pv. tomato (strain ATCC BAA-871 / DC3000), this protein is Thiopurine S-methyltransferase.